Reading from the N-terminus, the 851-residue chain is Protein FAM13B (851 aa).

One can recognise a Rho-GAP domain in the interval 23–212; the sequence is IPLDELQQGG…GLLENYYEFF (190 aa). Residues 556 to 565 are compositionally biased toward basic and acidic residues; the sequence is IKDAKHKNSD. The interval 556–611 is disordered; sequence IKDAKHKNSDGEFAPQTRPRSNTLPKSFGSSLDHEDGESEGEPRVIQKEKTPSKEA. Polar residues predominate over residues 573-585; that stretch reads RPRSNTLPKSFGS. Residues 596 to 611 show a composition bias toward basic and acidic residues; sequence GEPRVIQKEKTPSKEA.

The protein belongs to the FAM13 family.

This Mus musculus (Mouse) protein is Protein FAM13B (Fam13b).